The chain runs to 348 residues: MTQNLVTKPFLEVLSGNRQASPPMWMMRQAGRYLPEYREVRAKAGGFLDLCFNAEFAAEVTLQPIRRFGFDAAIIFSDILVVPYALGRSVRFEVGEGPRLDPLDSPDKVSTLTKAIDLSKLQAVFDALRITRRELPPETTLIGFCGSPFTVATYMVAGHGTPDQAPARNMAYQHPGAFAKIIDVLVESSIQYLLAQLEAGAEVLQIFDTWAGVLPPREFERWSIEPTRRIVEGVRKVKPGTKIIGFPRGAGAMLPAFVERTGVDGVSIDWTAEPSFVREKVQSKVVVQGNLDPLVLIAGGAALDEAVDDVLKNFSGGRHIFNLGHGIQPETPIAHVEQMLKRVRAFKG.

Residues 28–32, D78, Y154, T209, and H325 contribute to the substrate site; that span reads RQAGR.

Belongs to the uroporphyrinogen decarboxylase family. Homodimer.

It is found in the cytoplasm. It carries out the reaction uroporphyrinogen III + 4 H(+) = coproporphyrinogen III + 4 CO2. The protein operates within porphyrin-containing compound metabolism; protoporphyrin-IX biosynthesis; coproporphyrinogen-III from 5-aminolevulinate: step 4/4. Its function is as follows. Catalyzes the decarboxylation of four acetate groups of uroporphyrinogen-III to yield coproporphyrinogen-III. This is Uroporphyrinogen decarboxylase from Rhodopseudomonas palustris (strain BisA53).